We begin with the raw amino-acid sequence, 394 residues long: Phosphoglycerate kinase (394 aa).

Residues 21–23 (DFN), Arg-36, 59–62 (HLGR), Arg-118, and Arg-151 contribute to the substrate site. A Phosphoserine modification is found at Ser-183. ATP-binding residues include Lys-201 and Gly-292. A Phosphothreonine modification is found at Thr-299. ATP contacts are provided by residues Glu-323 and 350–353 (GGDS).

This sequence belongs to the phosphoglycerate kinase family. As to quaternary structure, monomer.

It is found in the cytoplasm. The catalysed reaction is (2R)-3-phosphoglycerate + ATP = (2R)-3-phospho-glyceroyl phosphate + ADP. It functions in the pathway carbohydrate degradation; glycolysis; pyruvate from D-glyceraldehyde 3-phosphate: step 2/5. This Bacillus cereus (strain ZK / E33L) protein is Phosphoglycerate kinase.